Reading from the N-terminus, the 338-residue chain is Uroporphyrinogen decarboxylase (338 aa).

Substrate is bound by residues 23 to 27 (RQAGR), D72, Y146, T201, and H312.

The protein belongs to the uroporphyrinogen decarboxylase family. Homodimer.

Its subcellular location is the cytoplasm. It catalyses the reaction uroporphyrinogen III + 4 H(+) = coproporphyrinogen III + 4 CO2. It functions in the pathway porphyrin-containing compound metabolism; protoporphyrin-IX biosynthesis; coproporphyrinogen-III from 5-aminolevulinate: step 4/4. In terms of biological role, catalyzes the decarboxylation of four acetate groups of uroporphyrinogen-III to yield coproporphyrinogen-III. This chain is Uroporphyrinogen decarboxylase, found in Thermodesulfovibrio yellowstonii (strain ATCC 51303 / DSM 11347 / YP87).